The following is a 103-amino-acid chain: Sec-independent protein translocase protein TatA (103 aa).

The helical transmembrane segment at 1 to 21 (MSLGPWEIAIIVLLIIVLFGA) threads the bilayer. The tract at residues 42–103 (VKEMQKDDET…QNYEDPNRTP (62 aa)) is disordered. Over residues 52-90 (PAQPEQQPQGYQHPQQIEAPQNLQQPNFQQHYQNQPQQP) the composition is skewed to low complexity. A compositionally biased stretch (basic and acidic residues) spans 94 to 103 (QNYEDPNRTP).

Belongs to the TatA/E family. The Tat system comprises two distinct complexes: a TatABC complex, containing multiple copies of TatA, TatB and TatC subunits, and a separate TatA complex, containing only TatA subunits. Substrates initially bind to the TatABC complex, which probably triggers association of the separate TatA complex to form the active translocon.

It is found in the cell membrane. Functionally, part of the twin-arginine translocation (Tat) system that transports large folded proteins containing a characteristic twin-arginine motif in their signal peptide across membranes. TatA could form the protein-conducting channel of the Tat system. The sequence is that of Sec-independent protein translocase protein TatA from Corynebacterium efficiens (strain DSM 44549 / YS-314 / AJ 12310 / JCM 11189 / NBRC 100395).